Reading from the N-terminus, the 688-residue chain is Acyl-CoA synthetase short-chain family member B, mitochondrial (688 aa).

This sequence belongs to the ATP-dependent AMP-binding enzyme family.

The protein localises to the mitochondrion. It catalyses the reaction acetate + ATP + CoA = acetyl-CoA + AMP + diphosphate. Functionally, activates acetate so that it can be used for lipid synthesis or for energy generation. The polypeptide is Acyl-CoA synthetase short-chain family member B, mitochondrial (aslB) (Dictyostelium discoideum (Social amoeba)).